Here is a 112-residue protein sequence, read N- to C-terminus: Nucleoid-associated protein FTF0810c (112 aa).

The segment at methionine 1–glutamate 27 is disordered. Basic and acidic residues predominate over residues glutamate 17–glutamate 27.

Belongs to the YbaB/EbfC family. In terms of assembly, homodimer.

The protein resides in the cytoplasm. Its subcellular location is the nucleoid. Binds to DNA and alters its conformation. May be involved in regulation of gene expression, nucleoid organization and DNA protection. The chain is Nucleoid-associated protein FTF0810c from Francisella tularensis subsp. tularensis (strain FSC 198).